A 220-amino-acid chain; its full sequence is NADH-quinone oxidoreductase subunit I (220 aa).

2 4Fe-4S ferredoxin-type domains span residues 71 to 102 (LQRL…IITH) and 112 to 141 (DSYT…MGNR). [4Fe-4S] cluster contacts are provided by Cys82, Cys85, Cys88, Cys92, Cys121, Cys124, Cys127, and Cys131. The tract at residues 187–220 (MQATPLDYVQEPSKEESKEETPTNPESNKGDENV) is disordered. Residues 198-207 (PSKEESKEET) are compositionally biased toward basic and acidic residues.

It belongs to the complex I 23 kDa subunit family. In terms of assembly, NDH-1 is composed of 14 different subunits. Subunits NuoA, H, J, K, L, M, N constitute the membrane sector of the complex. The cofactor is [4Fe-4S] cluster.

It is found in the cell inner membrane. The catalysed reaction is a quinone + NADH + 5 H(+)(in) = a quinol + NAD(+) + 4 H(+)(out). Functionally, NDH-1 shuttles electrons from NADH, via FMN and iron-sulfur (Fe-S) centers, to quinones in the respiratory chain. The immediate electron acceptor for the enzyme in this species is believed to be ubiquinone. Couples the redox reaction to proton translocation (for every two electrons transferred, four hydrogen ions are translocated across the cytoplasmic membrane), and thus conserves the redox energy in a proton gradient. This Helicobacter pylori (strain Shi470) protein is NADH-quinone oxidoreductase subunit I.